Here is a 148-residue protein sequence, read N- to C-terminus: Protein GLUTAMINE DUMPER 3 (148 aa).

Positions 1-24 (MEGRQYYPPRENVEGNRTTMGGGP) are disordered. The Extracellular segment spans residues 1-34 (MEGRQYYPPRENVEGNRTTMGGGPHSPWHSPVPY). Residues 35–55 (LFGGLAAMLGLIAFALLILAC) traverse the membrane as a helical segment. At 56–148 (SYWRLSGYLD…RSSESNGETH (93 aa)) the chain is on the cytoplasmic side. Positions 99–103 (VIMAG) match the VIMAG motif. Acidic residues predominate over residues 120–132 (CDDDDDEDDDVEG). Positions 120-148 (CDDDDDEDDDVEGSDQVVPRSSESNGETH) are disordered. Residues 138 to 148 (PRSSESNGETH) show a composition bias toward polar residues.

Belongs to the GLUTAMINE DUMPER 1 (TC 9.B.60) family. In terms of tissue distribution, expressed in the vascular tissues. Also detected in anthers.

Its subcellular location is the membrane. Its function is as follows. Probable subunit of an amino acid transporter involved in the regulation of the amino acid metabolism. Stimulates amino acid export by activating nonselective amino acid facilitators. Acts upstream genes involved in the salicylic acid (SA) pathway and in the geminivirus-host interaction. In Arabidopsis thaliana (Mouse-ear cress), this protein is Protein GLUTAMINE DUMPER 3 (GDU3).